The following is an 898-amino-acid chain: MASENPFRSILKALEKPDGGEFGNYYSLPALNDPRIDKLPYSIRILLESAIRNCDEFQVKSKDVEKILDWENTSPKQVEIPFKPARVLLQDFTGVPAVVDLACMRDAMNNLGGDSNKINPLVPVDLVIDHSVQVDVARSENAVQANMELEFQRNKERFAFLKWGSNAFHNMLVVPPGSGIVHQVNLEYLARVVFNTNGLLYPDSVVGTDSHTTMIDGLGVAGWGVGGIEAEATMLGQPMSMVLPGVVGFKLTGKLRDGMTATDLVLTVTQMLRKHGVVGKFVEFHGEGMRELSLADRATIANMSPEYGATMGFFPVDHVTLQYLRLTGRSDDTVSMIEAYLRANKMFVDYSEPESKTVYSSCLELNLEDVEPCVSGPKRPHDRVPLKEMKADWHSCLDNRVGFKGFAVPKEAQSKAVEFNFNGTTAQLRHGDVVIAAITSCTNTSNPSVMLGAALVAKKACDLGLEVKPWIKTSLAPGSGVVTKYLAKSGLQKYLNQLGFSIVGYGCTTCIGNSGDIHEAVASAIVDNDLVASAVLSGNRNFEGRVHPLTRANYLASPPLVVAYALAGTVDIDFETQPIGTGKDGKQIFFRDIWPSNKEVAEVVQSSVLPDMFKATYEAITKGNSMWNQLSVASGTLYEWDPKSTYIHEPPYFKGMTMSPPGPHGVKDAYCLLNFGDSITTDHISPAGSIHKDSPAAKYLMERGVDRRDFNSYGSRRGNDEIMARGTFANIRIVNKHLKGEVGPKTVHIPTGEKLSVFDAAMKYRNEGRDTIILAGAEYGSGSSRDWAAKGPMLLGVKAVISKSFERIHRSNLVGMGIIPLCFKAGEDAETLGLTGQELYTIELPNNVSEIKPGQDVTVVTNNGKSFTCTLRFDTEVELAYFDHGGILQYVIRNLIKQ.

Ala-2 carries the post-translational modification N-acetylalanine. Residues Gln-90 and 209–211 each bind substrate; that span reads DSH. [4Fe-4S] cluster is bound by residues Cys-441, Cys-507, and Cys-510. Substrate is bound by residues Arg-540, Arg-545, Arg-703, and 784–785; that span reads SR.

This sequence belongs to the aconitase/IPM isomerase family. Monomer. [4Fe-4S] cluster serves as cofactor. Mostly expressed in roots, stems and leaves, also present in stems and flowers.

The protein localises to the cytoplasm. The protein resides in the mitochondrion. The enzyme catalyses citrate = D-threo-isocitrate. Its pathway is carbohydrate metabolism; tricarboxylic acid cycle; isocitrate from oxaloacetate: step 2/2. In terms of biological role, catalyzes the isomerization of citrate to isocitrate via cis-aconitate. Contributes to oxidative stress tolerance. May have a role in respiration. The protein is Aconitate hydratase 1 of Arabidopsis thaliana (Mouse-ear cress).